The sequence spans 53 residues: Reg12l (53 aa).

The propeptide occupies 1 to 34 (RVLFRSGDQPADQPAERMQDISPEQNPLFHPDKR). Cystine bridges form between Cys-36-Cys-50, Cys-37-Cys-48, and Cys-42-Cys-51.

This sequence belongs to the conotoxin M superfamily. As to expression, expressed by the venom duct.

It localises to the secreted. The polypeptide is Reg12l (Conus regius (Crown cone)).